We begin with the raw amino-acid sequence, 142 residues long: Large ribosomal subunit protein uL11 (142 aa).

It belongs to the universal ribosomal protein uL11 family. Part of the ribosomal stalk of the 50S ribosomal subunit. Interacts with L10 and the large rRNA to form the base of the stalk. L10 forms an elongated spine to which L12 dimers bind in a sequential fashion forming a multimeric L10(L12)X complex. In terms of processing, one or more lysine residues are methylated.

Forms part of the ribosomal stalk which helps the ribosome interact with GTP-bound translation factors. This Xanthomonas campestris pv. campestris (strain B100) protein is Large ribosomal subunit protein uL11.